A 506-amino-acid polypeptide reads, in one-letter code: Ribose import ATP-binding protein RbsA 2 (506 aa).

2 ABC transporter domains span residues leucine 5–arginine 241 and valine 251–threonine 498. Glycine 37 to serine 44 provides a ligand contact to ATP.

It belongs to the ABC transporter superfamily. Ribose importer (TC 3.A.1.2.1) family. In terms of assembly, the complex is composed of an ATP-binding protein (RbsA), two transmembrane proteins (RbsC) and a solute-binding protein (RbsB).

Its subcellular location is the cell inner membrane. The catalysed reaction is D-ribose(out) + ATP + H2O = D-ribose(in) + ADP + phosphate + H(+). Functionally, part of the ABC transporter complex RbsABC involved in ribose import. Responsible for energy coupling to the transport system. The chain is Ribose import ATP-binding protein RbsA 2 from Burkholderia ambifaria (strain ATCC BAA-244 / DSM 16087 / CCUG 44356 / LMG 19182 / AMMD) (Burkholderia cepacia (strain AMMD)).